The sequence spans 1097 residues: Leukemia inhibitory factor receptor (1097 aa).

The N-terminal stretch at 1-44 (MMDIYVCLKRPSWMVDNKRMRTASNFQWLLSTFILLYLMNQVNS) is a signal peptide. The Extracellular segment spans residues 45–833 (QKKGAPHDLK…SMYVVTKENS (789 aa)). A Fibronectin type-III 1 domain is found at 49 to 138 (APHDLKCVTN…EQNVSLIPDT (90 aa)). Cystine bridges form between Cys-55/Cys-65 and Cys-82/Cys-90. 7 N-linked (GlcNAc...) asparagine glycosylation sites follow: Asn-64, Asn-85, Asn-131, Asn-143, Asn-191, Asn-243, and Asn-303. Cysteines 213 and 270 form a disulfide. Fibronectin type-III domains are found at residues 335–434 (TPQQ…VYPH), 435–534 (TPTS…TEAS), 538–629 (GPDT…IPND), 627–719 (PNDD…IGYI), and 724–833 (PIVA…KENS). A disulfide bridge connects residues Cys-341 and Cys-351. Asn-390, Asn-407, Asn-426, Asn-445, Asn-481, and Asn-489 each carry an N-linked (GlcNAc...) asparagine glycan. Cys-466 and Cys-511 are joined by a disulfide. The short motif at 519-523 (WSKWS) is the WSXWS motif element. 6 N-linked (GlcNAc...) asparagine glycosylation sites follow: Asn-572, Asn-652, Asn-663, Asn-680, Asn-729, and Asn-787. Residues 834–858 (VGLIIAILIPVAVAVIVGVVTSILC) traverse the membrane as a helical segment. The Cytoplasmic portion of the chain corresponds to 859-1097 (YRKREWIKET…TNFFQNKPND (239 aa)). A Box 1 motif motif is present at residues 869-877 (FYPDIPNPE). Position 927 is a phosphoserine (Ser-927). The interval 983–1005 (PQAKPEEEQENDPVGGAGYKPQM) is disordered. Ser-1044 carries the phosphoserine modification. The segment at 1066–1097 (RQFLIPPKDEDSPKSNGGGWSFTNFFQNKPND) is disordered. Over residues 1086 to 1097 (SFTNFFQNKPND) the composition is skewed to polar residues.

The protein belongs to the type I cytokine receptor family. Type 2 subfamily. In terms of assembly, heterodimer composed of LIFR and IL6ST. The heterodimer formed by LIFR and IL6ST interacts with the complex formed by CNTF and CNTFR.

It is found in the cell membrane. It localises to the secreted. In terms of biological role, signal-transducing molecule. May have a common pathway with IL6ST. The soluble form inhibits the biological activity of LIF by blocking its binding to receptors on target cells. This Homo sapiens (Human) protein is Leukemia inhibitory factor receptor (LIFR).